Here is a 1653-residue protein sequence, read N- to C-terminus: Ciliary rootlet coiled-coil protein 2 (1653 aa).

Polar residues predominate over residues 1–17; the sequence is MSSASSEPGNGDASQQP. The segment at 1–57 is disordered; the sequence is MSSASSEPGNGDASQQPLLGLDTVIQRLEDTILSPTASREDRALTVRGEGRQASPTP. Residues 38–50 are compositionally biased toward basic and acidic residues; that stretch reads SREDRALTVRGEG. Coiled coils occupy residues 86 to 145 and 310 to 351; these read VARV…SELE and KVAL…LVAQ. Residues 367-396 are disordered; it reads LGEPRRPLRSPQRATSPHQGASPPHICSPA. A coiled-coil region spans residues 423–1215; sequence LKSSQALVAS…QRKLAEVEAA (793 aa). The disordered stretch occupies residues 1302-1356; sequence GLQRQSPWASPEQPGSPTKGSDSSQALPGQQGTSPPARPHSPLRWPSPTPGGRSS. Positions 1304–1335 are enriched in polar residues; sequence QRQSPWASPEQPGSPTKGSDSSQALPGQQGTS. Residues 1361 to 1570 adopt a coiled-coil conformation; that stretch reads VATVQDILRD…QAQMTEMEQA (210 aa).

It belongs to the rootletin family.

The polypeptide is Ciliary rootlet coiled-coil protein 2 (Homo sapiens (Human)).